The chain runs to 391 residues: MKKDTLLLIILILFCIVHVYGIYVHIYGINVSLENVSQYLYNTTVYLSYENGTPCFYIGEKKEFVIIPPYIKVDRDIAPLIKKLRFKIENKSYNLIITKKNVNTNKMAIIFTSINGSREVNGNKTIIWIKDPLKLKQSEVEALYELPEKGEVIARYKDGKPAAIKINNKIYVGFKPDEDVLANLIYIHIVKKTSNPLPYILFTVFLTLASLMLTFQETLKKKFLELISALASVKVFILSRINLLDEEKVLLNDTRREIYNYILDNPGCHLRELSKNLNKPVSTLTWHLRILEKANLIKSKKFGNRLIYYPADMDMRDLPLLYLKNETQKSIFEYLLKSPAHLRKIAKDLNLNVETVRYNLKKLENLGIVKSKEEGNRIVYYINESILKFHK.

One can recognise an HTH arsR-type domain in the interval 235-330 (VFILSRINLL…LYLKNETQKS (96 aa)).

This is an uncharacterized protein from Methanocaldococcus jannaschii (strain ATCC 43067 / DSM 2661 / JAL-1 / JCM 10045 / NBRC 100440) (Methanococcus jannaschii).